The chain runs to 553 residues: Dihydroxy-acid dehydratase 1 (553 aa).

Asp-78 contributes to the Mg(2+) binding site. Position 119 (Cys-119) interacts with [2Fe-2S] cluster. The Mg(2+) site is built by Asp-120 and Lys-121. Residue Lys-121 is modified to N6-carboxylysine. [2Fe-2S] cluster is bound at residue Cys-191. A Mg(2+)-binding site is contributed by Glu-444. The active-site Proton acceptor is the Ser-470.

This sequence belongs to the IlvD/Edd family. As to quaternary structure, homodimer. The cofactor is [2Fe-2S] cluster. Mg(2+) serves as cofactor.

It catalyses the reaction (2R)-2,3-dihydroxy-3-methylbutanoate = 3-methyl-2-oxobutanoate + H2O. The enzyme catalyses (2R,3R)-2,3-dihydroxy-3-methylpentanoate = (S)-3-methyl-2-oxopentanoate + H2O. It participates in amino-acid biosynthesis; L-isoleucine biosynthesis; L-isoleucine from 2-oxobutanoate: step 3/4. It functions in the pathway amino-acid biosynthesis; L-valine biosynthesis; L-valine from pyruvate: step 3/4. Functionally, functions in the biosynthesis of branched-chain amino acids. Catalyzes the dehydration of (2R,3R)-2,3-dihydroxy-3-methylpentanoate (2,3-dihydroxy-3-methylvalerate) into 2-oxo-3-methylpentanoate (2-oxo-3-methylvalerate) and of (2R)-2,3-dihydroxy-3-methylbutanoate (2,3-dihydroxyisovalerate) into 2-oxo-3-methylbutanoate (2-oxoisovalerate), the penultimate precursor to L-isoleucine and L-valine, respectively. The chain is Dihydroxy-acid dehydratase 1 from Methanosarcina acetivorans (strain ATCC 35395 / DSM 2834 / JCM 12185 / C2A).